Reading from the N-terminus, the 141-residue chain is Nucleoside diphosphate kinase (141 aa).

ATP is bound by residues K11, F59, R87, T93, R104, and N114. The active-site Pros-phosphohistidine intermediate is H117.

This sequence belongs to the NDK family. Homotetramer. Requires Mg(2+) as cofactor.

The protein localises to the cytoplasm. The enzyme catalyses a 2'-deoxyribonucleoside 5'-diphosphate + ATP = a 2'-deoxyribonucleoside 5'-triphosphate + ADP. It catalyses the reaction a ribonucleoside 5'-diphosphate + ATP = a ribonucleoside 5'-triphosphate + ADP. Functionally, major role in the synthesis of nucleoside triphosphates other than ATP. The ATP gamma phosphate is transferred to the NDP beta phosphate via a ping-pong mechanism, using a phosphorylated active-site intermediate. The polypeptide is Nucleoside diphosphate kinase (Paraburkholderia xenovorans (strain LB400)).